The chain runs to 574 residues: Interactor of HORMAD1 protein 1 (574 aa).

The tract at residues 113-133 (GLSKQFEEKKRRATDQSDSET) is disordered. A compositionally biased stretch (basic and acidic residues) spans 117 to 127 (QFEEKKRRATD). A coiled-coil region spans residues 217 to 240 (MEMKSTLKNLEVLVVEQTKNLQQF). Disordered stretches follow at residues 267-324 (GHLK…GVWD), 372-393 (FSNLPSQRAGNGQGLMAQGASQ), and 426-457 (TEQKGRPCRKRRRGKKQQPQRSKRGGLLDRKQ). A compositionally biased stretch (low complexity) spans 272–284 (STSQTSPSLTQSL). Over residues 372-381 (FSNLPSQRAG) the composition is skewed to polar residues. The span at 431 to 449 (RPCRKRRRGKKQQPQRSKR) shows a compositional bias: basic residues. Serine 476, serine 569, and serine 570 each carry phosphoserine.

Part of the MCD recombinosome complex, at least composed of IHO1, REC114 and MEI4. Interacts with REC114. Interacts with MEI4. Interacts with HORMAD1. Interacts with ANKRD31. Detected in spermatocytes and testis (at protein level).

Its subcellular location is the chromosome. Functionally, required for DNA double-strand breaks (DSBs) formation in unsynapsed regions during meiotic recombination. Probably acts by forming a complex with MEI4 and REC114, which activates DSBs formation in unsynapsed regions, an essential step to ensure completion of synapsis. Not required for HORMAD1 functions in pairing-independent synaptonemal complex formation, ATR recruitment to unsynapsed axes, meiotic silencing of unsynapsed chromatin (MSUC) or meiotic surveillance. The polypeptide is Interactor of HORMAD1 protein 1 (Mus musculus (Mouse)).